The following is a 187-amino-acid chain: Elongation factor P (187 aa).

This sequence belongs to the elongation factor P family.

Its subcellular location is the cytoplasm. It participates in protein biosynthesis; polypeptide chain elongation. Involved in peptide bond synthesis. Stimulates efficient translation and peptide-bond synthesis on native or reconstituted 70S ribosomes in vitro. Probably functions indirectly by altering the affinity of the ribosome for aminoacyl-tRNA, thus increasing their reactivity as acceptors for peptidyl transferase. This Chromobacterium violaceum (strain ATCC 12472 / DSM 30191 / JCM 1249 / CCUG 213 / NBRC 12614 / NCIMB 9131 / NCTC 9757 / MK) protein is Elongation factor P.